We begin with the raw amino-acid sequence, 266 residues long: tRNA pseudouridine synthase A (266 aa).

Asp-57 functions as the Nucleophile in the catalytic mechanism. Tyr-115 is a substrate binding site.

Belongs to the tRNA pseudouridine synthase TruA family. Homodimer.

The catalysed reaction is uridine(38/39/40) in tRNA = pseudouridine(38/39/40) in tRNA. Formation of pseudouridine at positions 38, 39 and 40 in the anticodon stem and loop of transfer RNAs. The protein is tRNA pseudouridine synthase A of Buchnera aphidicola subsp. Acyrthosiphon pisum (strain APS) (Acyrthosiphon pisum symbiotic bacterium).